Consider the following 1639-residue polypeptide: Merozoite surface protein 1 (1639 aa).

The first 19 residues, 1–19 (MKIIFFLCSFLFFIINTQC), serve as a signal peptide directing secretion. 2 stretches are compositionally biased toward polar residues: residues 58-67 (SGTAVTTSTP) and 107-119 (NSRR…NSSD). Disordered stretches follow at residues 58 to 78 (SGTA…SGGS) and 94 to 122 (VASG…DSDA). Asparagine 116 and asparagine 268 each carry an N-linked (GlcNAc...) asparagine glycan. The segment at 689–764 (KKNIKTEGQS…VPTPPAPVNN (76 aa)) is disordered. Polar residues-rich tracts occupy residues 694–704 (TEGQSDNSEPS) and 711–722 (GQATTKPGQQAG). The span at 730-741 (VQAQAQEQKQAQ) shows a compositional bias: low complexity. N-linked (GlcNAc...) asparagine glycosylation is found at asparagine 764, asparagine 768, asparagine 783, and asparagine 844. The tract at residues 893-915 (SMQPLSLTPQDKPEVSANDDTSH) is disordered. N-linked (GlcNAc...) asparagine glycosylation is found at asparagine 920, asparagine 964, asparagine 1058, asparagine 1165, and asparagine 1174. The segment at 1002-1116 (QLSFDLYNKY…EESIQTEDNY (115 aa)) is required for binding to host erythrocyte cell membrane. Polar residues predominate over residues 1199–1212 (VSESGSDTLEQSQP). The tract at residues 1199–1229 (VSESGSDTLEQSQPKKPASTHVGAESNTITT) is disordered. Residues asparagine 1445 and asparagine 1526 are each glycosylated (N-linked (GlcNAc...) asparagine). EGF-like domains follow at residues 1530 to 1570 (HQCV…VENP) and 1571 to 1618 (NPTC…IFCS). Cystine bridges form between cysteine 1532–cysteine 1543, cysteine 1537–cysteine 1553, cysteine 1555–cysteine 1566, cysteine 1574–cysteine 1587, cysteine 1581–cysteine 1601, and cysteine 1603–cysteine 1617. A lipid anchor (GPI-anchor amidated serine) is attached at serine 1618. The propeptide at 1619–1639 (SSNFLGISFLLILMLILYSFI) is removed in mature form.

As to quaternary structure, forms a complex composed of subunits p83, p30, p38, and p42 which remain non-covalently associated; the complex is formed at the merozoite surface prior to egress from host erythrocytes. Forms a complex composed of processed MSP1 subunits, MSP6 subunit p36 and MSP7; the complex is formed at the merozoite surface prior to egress from host erythrocytes. Within the complex, interacts (via subunit p38) with MSP6 subunit p36 and (via subunits p83, p30 and p38) with MSP7 (via subunit p22). Forms a complex composed of MSP1, MSP6, DBLMSP1 and DBLMSP2. Within the complex, interacts (via subunit p38) with DBLMSP1 and DBLMSP2. Forms a complex composed of MSP1, and rhoptry proteins RhopH3, RAP1 and CLAG9/RhopH3. Within the complex, interacts (via subunits p42 and p19) with RhopH3 (via C-terminus). Forms a complex composed of MSP1, MSP6, MSP7, MSP9 and MSP3; within the complex, MSP6 and MSP9 mediate the binding to the host erythrocyte. Interacts (via subunits p19 and p42) with MSP9; the interaction is direct; MSP1 subunits p19 or p42, and MSP9 form a co-ligand complex that interacts with host SLC4A1/Band 3 protein. May interact with PFD6. Interacts with host spectrin. In terms of assembly, interacts with host glycophorin GYPA in a sialic acid-independent manner. Interacts with host proinflammatory cytokine S100P; the interaction blocks S100P inflammatory and chemotactic activities. As to quaternary structure, interacts with host SLC4A1/Band 3 (via 5ABC region) on the host erythrocyte surface in a sialic acid-independent manner. Post-translationally, the p190 precursor is cleaved by SUB1 prior to merozoite egress into 4 subunits p83, p30, p38, and p42 which remain non-covalently associated. SUB1-mediated proteolytic cleavage occurs in an orderly manner; the first cleavage occurs at the p83/p30 site, followed by cleavage at the p30/p38 site, the last cleavage occurs at the p38/p42 site. The order of cleavage is essential for parasite viability. SUB1-mediated processing is essential for merozoite egress. In a second processing step during erythrocyte invasion, p42 is cleaved by SUB2 into p33 and p19; the latter remains attached to the merozoite surface via its GPI-anchor and stays on the surface during the subsequent ring stage.

The protein resides in the cell membrane. Its subcellular location is the secreted. The protein localises to the vacuole membrane. In terms of biological role, during the asexual blood stage, involved in merozoite egress from host erythrocytes possibly via its interaction with the host cytoskeleton protein spectrin resulting in the destabilization of the host cytoskeleton and thus leading to erythrocyte cell membrane rupture. Involved in the binding to host erythrocytes and is required for host erythrocyte invasion. By binding to host proinflammatory cytokine S100P may interfere with host immune responses. Functionally, involved in merozoite invasion of host erythrocytes. May play a role in the biogenesis and/or function of the food vacuole during the intraerythrocytic development. This Plasmodium falciparum (isolate Wellcome) protein is Merozoite surface protein 1.